Consider the following 123-residue polypeptide: Large ribosomal subunit protein bL12 (123 aa).

Belongs to the bacterial ribosomal protein bL12 family. As to quaternary structure, homodimer. Part of the ribosomal stalk of the 50S ribosomal subunit. Forms a multimeric L10(L12)X complex, where L10 forms an elongated spine to which 2 to 4 L12 dimers bind in a sequential fashion. Binds GTP-bound translation factors.

In terms of biological role, forms part of the ribosomal stalk which helps the ribosome interact with GTP-bound translation factors. Is thus essential for accurate translation. This is Large ribosomal subunit protein bL12 from Hydrogenovibrio crunogenus (strain DSM 25203 / XCL-2) (Thiomicrospira crunogena).